A 170-amino-acid chain; its full sequence is Large ribosomal subunit protein uL15 (170 aa).

Residues 1 to 12 (MKLHDLRPAEGS) show a composition bias toward basic and acidic residues. A disordered region spans residues 1 to 50 (MKLHDLRPAEGSHRKRKRIGRGHGSGKVKTGGKGMMGQKARSGPGPYRTF). The segment covering 13-26 (HRKRKRIGRGHGSG) has biased composition (basic residues).

This sequence belongs to the universal ribosomal protein uL15 family. Part of the 50S ribosomal subunit.

Its function is as follows. Binds to the 23S rRNA. The protein is Large ribosomal subunit protein uL15 of Chloroflexus aggregans (strain MD-66 / DSM 9485).